Reading from the N-terminus, the 433-residue chain is Enolase (433 aa).

Q167 contributes to the (2R)-2-phosphoglycerate binding site. Residue E209 is the Proton donor of the active site. Residues D246, E291, and D318 each coordinate Mg(2+). N6-acetyllysine is present on K326. Residues K343, R372, S373, and K394 each coordinate (2R)-2-phosphoglycerate. K343 serves as the catalytic Proton acceptor. K343 is subject to N6-(2-hydroxyisobutyryl)lysine.

The protein belongs to the enolase family. In terms of assembly, component of the RNA degradosome, a multiprotein complex involved in RNA processing and mRNA degradation. Mg(2+) serves as cofactor. Acetylated and 2-hydroxyisobutyrylated at Lys-326 and Lys-343, respectively, reducing the enolase activity. Deacetylated and de-2-hydroxyisobutyrylated by NpdA/CobB, increasing the enolase activity.

It localises to the cytoplasm. Its subcellular location is the secreted. The protein resides in the cell surface. It carries out the reaction (2R)-2-phosphoglycerate = phosphoenolpyruvate + H2O. Its pathway is carbohydrate degradation; glycolysis; pyruvate from D-glyceraldehyde 3-phosphate: step 4/5. Catalyzes the reversible conversion of 2-phosphoglycerate (2-PG) into phosphoenolpyruvate (PEP). It is essential for the degradation of carbohydrates via glycolysis. This is Enolase from Proteus mirabilis (strain HI4320).